The primary structure comprises 168 residues: Lipoprotein signal peptidase (168 aa).

A run of 3 helical transmembrane segments spans residues 8–28 (TLLV…VVLL), 70–90 (KYFL…YLFF), and 104–124 (VLLC…GHIV). Catalysis depends on residues aspartate 125 and aspartate 143. The helical transmembrane segment at 134–154 (WAFPTFNVADVLISLGTLLLV) threads the bilayer.

Belongs to the peptidase A8 family.

Its subcellular location is the cell inner membrane. The enzyme catalyses Release of signal peptides from bacterial membrane prolipoproteins. Hydrolyzes -Xaa-Yaa-Zaa-|-(S,diacylglyceryl)Cys-, in which Xaa is hydrophobic (preferably Leu), and Yaa (Ala or Ser) and Zaa (Gly or Ala) have small, neutral side chains.. It functions in the pathway protein modification; lipoprotein biosynthesis (signal peptide cleavage). Functionally, this protein specifically catalyzes the removal of signal peptides from prolipoproteins. This chain is Lipoprotein signal peptidase, found in Chlamydia pneumoniae (Chlamydophila pneumoniae).